We begin with the raw amino-acid sequence, 159 residues long: Ribosome maturation factor RimP (159 aa).

Belongs to the RimP family.

The protein localises to the cytoplasm. Functionally, required for maturation of 30S ribosomal subunits. This is Ribosome maturation factor RimP from Geobacter sulfurreducens (strain ATCC 51573 / DSM 12127 / PCA).